The following is a 309-amino-acid chain: Electron transfer flavoprotein subunit alpha (309 aa).

253–281 (LYIAVGISGAIQHLAGMKDSKVIVAINKD) contributes to the FAD binding site.

This sequence belongs to the ETF alpha-subunit/FixB family. As to quaternary structure, heterodimer of an alpha and a beta subunit. It depends on FAD as a cofactor.

In terms of biological role, the electron transfer flavoprotein serves as a specific electron acceptor for other dehydrogenases. It transfers the electrons to the main respiratory chain via ETF-ubiquinone oxidoreductase (ETF dehydrogenase). This Pseudomonas aeruginosa (strain ATCC 15692 / DSM 22644 / CIP 104116 / JCM 14847 / LMG 12228 / 1C / PRS 101 / PAO1) protein is Electron transfer flavoprotein subunit alpha (etfA).